The primary structure comprises 352 residues: Quinolinate synthase (352 aa).

Iminosuccinate-binding residues include His48 and Ser69. Residue Cys114 coordinates [4Fe-4S] cluster. Iminosuccinate contacts are provided by residues 140 to 142 (YAN) and Ser157. Cys201 lines the [4Fe-4S] cluster pocket. Residues 227-229 (HPE) and Thr244 each bind iminosuccinate. A [4Fe-4S] cluster-binding site is contributed by Cys298.

The protein belongs to the quinolinate synthase family. Type 1 subfamily. The cofactor is [4Fe-4S] cluster.

It localises to the cytoplasm. The enzyme catalyses iminosuccinate + dihydroxyacetone phosphate = quinolinate + phosphate + 2 H2O + H(+). It functions in the pathway cofactor biosynthesis; NAD(+) biosynthesis; quinolinate from iminoaspartate: step 1/1. Catalyzes the condensation of iminoaspartate with dihydroxyacetone phosphate to form quinolinate. The sequence is that of Quinolinate synthase from Pseudomonas syringae pv. tomato (strain ATCC BAA-871 / DC3000).